Consider the following 241-residue polypeptide: HTH-type quorum-sensing regulator RhlR (241 aa).

One can recognise an HTH luxR-type domain in the interval 174–239 (LMSNPVCLSH…LAAAYAAALG (66 aa)). Positions 198–217 (SGEIAIILSISESTVNFHHK) form a DNA-binding region, H-T-H motif.

The protein belongs to the autoinducer-regulated transcriptional regulatory protein family. Homodimer in the absence of any acyl-L-homoserine lactone. The presence of the autoinducer C4-HSL has no significant effect on dimerization whereas N-(3-oxododecanoyl)-L-homoserine lactone (3O-C12-HSL), the LasR inducer, is able to dissociate the RhlR homodimers into monomers.

The protein localises to the cytoplasm. Its activity is regulated as follows. Activated by interaction with the autoinducer signal molecule N-butanoyl-L-homoserine lactone (C4-HSL or BHL), the product of the RhlI synthase. Is also activated by binding to rosmarinic acid (RA), a homoserine lactone mimic produced by plants, which induces a broad quorum sensing response, including the induction of all major quorum sensing controlled virulence factors. Rosmarinic acid secretion may be a plant defense mechanism to stimulate a premature quorum sensing response. In terms of biological role, quorum-sensing regulator that controls the expression of multiple virulence factors in response to extracellular signaling molecules called autoinducers. Involved, among others, in the transcriptional regulation of genes that are responsible for rhamnolipid surfactant biosynthesis. Acts by binding to a specific sequence in the rhlAB regulatory region, both in the presence and in the absence of its autoinducer. In the former case it activates transcription of the promoter, whereas in the latter it acts as a transcriptional repressor. Also regulates the expression of the rmlBDAC operon, encoding dTDP-L-rhamnose biosynthetic enzymes, by binding to the rml box in the promoter region. In addition, is involved in the regulation of the production of elastase (lasB) and pyocyanine. This chain is HTH-type quorum-sensing regulator RhlR, found in Pseudomonas aeruginosa (strain ATCC 15692 / DSM 22644 / CIP 104116 / JCM 14847 / LMG 12228 / 1C / PRS 101 / PAO1).